A 210-amino-acid chain; its full sequence is Chloramphenicol acetyltransferase (210 aa).

Residue histidine 79 is part of the active site.

The protein belongs to the transferase hexapeptide repeat family.

It catalyses the reaction chloramphenicol + acetyl-CoA = chloramphenicol 3-acetate + CoA. Functionally, this enzyme is an effector of chloramphenicol resistance in bacteria. This chain is Chloramphenicol acetyltransferase (catB2), found in Escherichia coli.